The primary structure comprises 314 residues: tRNA pseudouridine synthase B (314 aa).

D41 functions as the Nucleophile in the catalytic mechanism.

This sequence belongs to the pseudouridine synthase TruB family. Type 1 subfamily.

It catalyses the reaction uridine(55) in tRNA = pseudouridine(55) in tRNA. Functionally, responsible for synthesis of pseudouridine from uracil-55 in the psi GC loop of transfer RNAs. The chain is tRNA pseudouridine synthase B from Prochlorococcus marinus (strain NATL1A).